The following is a 378-amino-acid chain: Glutamate 5-kinase 1 (378 aa).

Residue Lys-13 coordinates ATP. The substrate site is built by Ser-53, Asp-140, and Asn-152. An ATP-binding site is contributed by 172–173 (SD). The 78-residue stretch at 278–355 (AGRLTVDAGA…AEIETVLGYE (78 aa)) folds into the PUA domain.

Belongs to the glutamate 5-kinase family.

It is found in the cytoplasm. It catalyses the reaction L-glutamate + ATP = L-glutamyl 5-phosphate + ADP. The protein operates within amino-acid biosynthesis; L-proline biosynthesis; L-glutamate 5-semialdehyde from L-glutamate: step 1/2. Its function is as follows. Catalyzes the transfer of a phosphate group to glutamate to form L-glutamate 5-phosphate. This is Glutamate 5-kinase 1 from Mesorhizobium japonicum (strain LMG 29417 / CECT 9101 / MAFF 303099) (Mesorhizobium loti (strain MAFF 303099)).